The chain runs to 21 residues: Ocellatin-4 (21 aa).

I21 is subject to Isoleucine amide.

As to expression, expressed by the skin dorsal glands.

The protein resides in the secreted. Has hemolytic activity against human erythrocytes (HC50=14.3 uM). Has antibacterial activity against the Gram-positive bacterium S.aureus ATCC 25923 (MIC=64 uM) and the Gram-negative bacterium E.coli ATCC 25922 (MIC=64 uM). The chain is Ocellatin-4 from Leptodactylus ocellatus (Argus frog).